A 464-amino-acid polypeptide reads, in one-letter code: Agamous-like MADS-box protein AGL92 (464 aa).

One can recognise an MADS-box domain in the interval 1 to 60; that stretch reads MRTKTKLVLIPDRHFRRATFRKRNAGIRKKLHELTTLCDIKACAVIYSPFENPTVWPSTE. Residues 85–114 are a coiled coil; it reads ETFLRDQITKEQNKLESLRRENRETQLKHF. The segment at 443–464 is disordered; sequence TSTGHMPSTTTTTTNNNNNNNV. The span at 451-464 shows a compositional bias: low complexity; sequence TTTTTTNNNNNNNV.

In terms of assembly, interacts with AGL62.

The protein resides in the nucleus. Functionally, putative transcription factor. The chain is Agamous-like MADS-box protein AGL92 (AGL92) from Arabidopsis thaliana (Mouse-ear cress).